Consider the following 221-residue polypeptide: CASP-like protein 2U10 (221 aa).

Residues 1–22 (MDSSSKPMNGSAGGSPVGDERK) are disordered. Topologically, residues 1 to 31 (MDSSSKPMNGSAGGSPVGDERKMGDHEHEFR) are cytoplasmic. Residues 32 to 52 (ISIILLRSFLLVLVIISEALM) form a helical membrane-spanning segment. Topologically, residues 53 to 91 (VTDRETGSVPLPFFGLPRPVFVTKTAKYELVTGLKFYVD) are extracellular. The chain crosses the membrane as a helical span at residues 92–112 (ALGVVIGYTVLHLLFNIGLVA). Topologically, residues 113–122 (TKGTVVDCKS) are cytoplasmic. The helical transmembrane segment at 123-143 (VAWISFIADSMMGYLLLSSAA) threads the bilayer. Topologically, residues 144-174 (VATEIGYLAEEGAPAVLWRKVCNAFGYFCTV) are extracellular. Residues 175-195 (YAISVVICFIAALVSFVVVGI) form a helical membrane-spanning segment. Residues 196–221 (SAYHLFRLYGIQQQAAREKEKLSAEM) are Cytoplasmic-facing.

It belongs to the Casparian strip membrane proteins (CASP) family. Homodimer and heterodimers.

The protein localises to the cell membrane. The polypeptide is CASP-like protein 2U10 (Selaginella moellendorffii (Spikemoss)).